The chain runs to 407 residues: Naringenin 8-dimethylallyltransferase 2, chloroplastic (407 aa).

Residues 1-23 (MGFVLPASFPGASSITTGGSCLR) constitute a chloroplast transit peptide. The next 8 membrane-spanning stretches (helical) occupy residues 117-137 (FCRP…SLVA), 145-165 (SLAF…IHIF), 206-226 (ILGL…TVFI), 248-268 (VLTA…GFFL), 285-305 (LIFC…FKDI), 328-348 (VFWI…LVGA), 352-372 (ILWS…VLWY), and 383-403 (VVLQ…YCLI).

Belongs to the UbiA prenyltransferase family. It depends on Mg(2+) as a cofactor. The cofactor is Mn(2+).

It is found in the plastid. Its subcellular location is the chloroplast membrane. The enzyme catalyses (2S)-naringenin + dimethylallyl diphosphate = sophoraflavanone B + diphosphate. Its function is as follows. Involved in the biosynthesis of sophoraflavanone G (SFG). Can use flavanones (naringenin, liquiritigenin and hesperetin) as substrates, but not flavonols or isoflavones. Shows a strict specificity for dimethylallyl diphosphate. The sequence is that of Naringenin 8-dimethylallyltransferase 2, chloroplastic (N8DT-2) from Sophora flavescens (Shrubby sophora).